A 142-amino-acid polypeptide reads, in one-letter code: Hemoglobin subunit alpha-2 (142 aa).

Residues 2–142 form the Globin domain; that stretch reads VLSPADKTNV…VSTVLTSKYR (141 aa). An O2-binding site is contributed by H59. H88 is a binding site for heme b.

It belongs to the globin family. As to quaternary structure, heterotetramer of two alpha chains and two beta chains. Red blood cells.

Functionally, involved in oxygen transport from the lung to the various peripheral tissues. The sequence is that of Hemoglobin subunit alpha-2 from Arctocephalus galapagoensis (Galapagoes fur seal).